The following is a 118-amino-acid chain: Beta-2-microglobulin (118 aa).

The first 20 residues, 1–20, serve as a signal peptide directing secretion; sequence MARFVALVLLGLLSLSGLDA. One can recognise an Ig-like C1-type domain in the interval 25-112; that stretch reads PKIQVYSRHP…HVTLEQPRIV (88 aa). Cysteine 45 and cysteine 99 form a disulfide bridge.

This sequence belongs to the beta-2-microglobulin family. Heterodimer of an alpha chain and a beta chain. Beta-2-microglobulin is the beta-chain of major histocompatibility complex class I molecules. Forms a heterotrimer with MR1 and a metabolite antigen.

Its subcellular location is the secreted. In terms of biological role, component of the class I major histocompatibility complex (MHC). Involved in the presentation of peptide antigens to the immune system. The protein is Beta-2-microglobulin (B2M) of Bos taurus (Bovine).